The following is a 419-amino-acid chain: MSTNSSNPNEVMEKVQDLKIDDSKPKVDSEEQPEAESDGESATDGAQKKKKKKKSKKKKKITAIDNSYPDGVFPEGEWQEYPLDVNSYRTTSEEKRYLDRQQNNHWQDFRKGAEIHRRVRHKAQSSIRPGMNMTEIADLIENSVRSYANNDHTLKAGIGFPTGLSLNHVAAHYTPNAGDKTVLNYEDVMKVDIGVHVNGHIVDSAFTLTFDDKYDSLLKAVKEATNTGVKEAGIDVRLNDIGEAIQEVMESYEMELNGKTYPIKCIRNLNGHNIGDYLIHSGKTVPIVPNGDMTKMEEGETFAIETFGSTGNGYVLPQGECSHYAKNPGTDDIVVPGDKAKSLLNVINENFGTLPWCRRYLDRLGQDKYLLALNQLVRAGIVQDYPPIVDIKGSYTAQFEHTILLHPHKKEVVSRGDDY.

The disordered stretch occupies residues 1–69 (MSTNSSNPNE…KITAIDNSYP (69 aa)). Positions 11–29 (VMEKVQDLKIDDSKPKVDS) are enriched in basic and acidic residues. The segment covering 30–41 (EEQPEAESDGES) has biased composition (acidic residues). Residues 48–61 (KKKKKKKSKKKKKI) are compositionally biased toward basic residues. Position 172 (histidine 172) interacts with substrate. Aspartate 192, aspartate 203, and histidine 272 together coordinate a divalent metal cation. Residue histidine 280 coordinates substrate. Glutamate 305 and glutamate 400 together coordinate a divalent metal cation.

The protein belongs to the peptidase M24A family. Methionine aminopeptidase eukaryotic type 2 subfamily. Co(2+) is required as a cofactor. Zn(2+) serves as cofactor. The cofactor is Mn(2+). Requires Fe(2+) as cofactor.

It is found in the cytoplasm. The catalysed reaction is Release of N-terminal amino acids, preferentially methionine, from peptides and arylamides.. In terms of biological role, cotranslationally removes the N-terminal methionine from nascent proteins. The N-terminal methionine is often cleaved when the second residue in the primary sequence is small and uncharged (Met-Ala-, Cys, Gly, Pro, Ser, Thr, or Val). This is Methionine aminopeptidase 2 from Debaryomyces hansenii (strain ATCC 36239 / CBS 767 / BCRC 21394 / JCM 1990 / NBRC 0083 / IGC 2968) (Yeast).